Reading from the N-terminus, the 340-residue chain is Probable cyclic nucleotide phosphodiesterase PsycPRwf_0181 (340 aa).

Residues 1 to 36 (MAPLPHSVSPRHTQVADNGRLSEPTDYHPPTEISTD) are disordered. Positions 47, 49, 128, 158, 237, 276, and 278 each coordinate Fe cation. Residues His-49, Asp-128, and 158–159 (NH) each bind AMP. His-278 is a binding site for AMP.

The protein belongs to the cyclic nucleotide phosphodiesterase class-III family. It depends on Fe(2+) as a cofactor.

The sequence is that of Probable cyclic nucleotide phosphodiesterase PsycPRwf_0181 from Psychrobacter sp. (strain PRwf-1).